Consider the following 127-residue polypeptide: uncharacterized protein (127 aa).

This sequence belongs to the transcriptional regulatory CopG/NikR family.

This is an uncharacterized protein from Methanocaldococcus jannaschii (strain ATCC 43067 / DSM 2661 / JAL-1 / JCM 10045 / NBRC 100440) (Methanococcus jannaschii).